Reading from the N-terminus, the 315-residue chain is MFEKIAIIGGSGNVGSHIAFLGAMRHIAKEILLFSNDIPRCKGVGLDISQAAAIFDIPILIKGCNSYEEIAESEVVIITAGFPRTPNMTRNDLLLKNASIIQEISSNVARIAPQSLLIVVSNPLDAMCLVAKQWSKFEKERVIGMAGILDSARLTYESKVMLGDFNKHIQSYVIGSHSDDMLPLLRHCLCEGKVFTDIFTPKMQEELIKETKGGGAKIVNYYQKGSAYFAPASGVIKILEAISTLNEEILVCSVFTEGEYGIKDIYLGLPIKLGKKGVEHIVELPLNQQEQEMLNISTQGIKEQVEILKDNKLLY.

NAD(+) is bound at residue 9 to 15 (GGSGNVG). 2 residues coordinate substrate: Arg-84 and Arg-90. NAD(+) is bound by residues Asn-97 and 120 to 122 (VSN). Substrate is bound by residues Asn-122 and Arg-153. His-177 (proton acceptor) is an active-site residue.

The protein belongs to the LDH/MDH superfamily.

The enzyme catalyses (S)-malate + NAD(+) = oxaloacetate + NADH + H(+). Catalyzes the reversible oxidation of malate to oxaloacetate. The sequence is that of Malate dehydrogenase from Helicobacter hepaticus (strain ATCC 51449 / 3B1).